The primary structure comprises 495 residues: UDP-N-acetylmuramate--L-alanine ligase (495 aa).

122-128 (GTHGKTT) contacts ATP.

Belongs to the MurCDEF family.

The protein resides in the cytoplasm. It catalyses the reaction UDP-N-acetyl-alpha-D-muramate + L-alanine + ATP = UDP-N-acetyl-alpha-D-muramoyl-L-alanine + ADP + phosphate + H(+). It functions in the pathway cell wall biogenesis; peptidoglycan biosynthesis. Functionally, cell wall formation. The polypeptide is UDP-N-acetylmuramate--L-alanine ligase (Mycobacterium leprae (strain TN)).